The chain runs to 460 residues: MTCQVTQKAREGTINPIFTCQPAGAQFASIGIKDCIGIVHGGQGCVMFVRLLISQHMKESFEIASSSVHEDGAVFGALDRVETAVEVLLTRYPDVKVVPIITTCSTEIIGDDVDGLLSKLEDELLPTKFPGREVHLLTVHCPSFVGSMITGYDKAVHDFVKKFATKDEPSDKINLITGWVNPGDVKELKHLLEVMEVKANVLFEVESFDSPLMPDLEHHSHGSTTIEDLRDTANAKGTIALNRYEGMKAADYLKKKFKVPAVIGPTPVGIRNTDAFLKAVSEMTGQPIPAQLVKERGLALDAIADIGHMFLADKRVAIYANPDLAIGLTEFCLDLEMKPKLLLLGDDNSGYVKDPRVVALQENAPDLEIVTNADFWDLESRIQQGLELDLILGHSKGRFISIDYKVPMVRVGFPTYDRAGMYRHPVLGYGGAMFLAETMANTLFADMEAKKNKEWILNVW.

Cysteine 20, cysteine 45, cysteine 104, and serine 143 together coordinate [8Fe-7S] cluster.

It belongs to the NifD/NifK/NifE/NifN family. Hexamer of two alpha, two beta, and two delta chains. It depends on [8Fe-7S] cluster as a cofactor.

It catalyses the reaction N2 + 8 reduced [2Fe-2S]-[ferredoxin] + 16 ATP + 16 H2O = H2 + 8 oxidized [2Fe-2S]-[ferredoxin] + 2 NH4(+) + 16 ADP + 16 phosphate + 6 H(+). This iron-iron protein is part of the nitrogenase complex that catalyzes the key enzymatic reactions in nitrogen fixation. Other nitrogenase complexes utilize a molybdenum-iron protein or a vanadium-iron protein. The chain is Nitrogenase iron-iron protein beta chain (anfK) from Rhodobacter capsulatus (Rhodopseudomonas capsulata).